The chain runs to 297 residues: tRNA (guanine-N(7)-)-methyltransferase (297 aa).

S-adenosyl-L-methionine contacts are provided by Glu22, Glu47, Asp74, and Asp97. Residue Asp97 is part of the active site. Substrate contacts are provided by residues Lys101, Asp133, and 165-168 (TKYE).

It belongs to the class I-like SAM-binding methyltransferase superfamily. TrmB family.

It catalyses the reaction guanosine(46) in tRNA + S-adenosyl-L-methionine = N(7)-methylguanosine(46) in tRNA + S-adenosyl-L-homocysteine. It functions in the pathway tRNA modification; N(7)-methylguanine-tRNA biosynthesis. Functionally, catalyzes the formation of N(7)-methylguanine at position 46 (m7G46) in tRNA. The sequence is that of tRNA (guanine-N(7)-)-methyltransferase from Aquifex aeolicus (strain VF5).